Reading from the N-terminus, the 332-residue chain is Anthranilate phosphoribosyltransferase (332 aa).

5-phospho-alpha-D-ribose 1-diphosphate contacts are provided by residues G79, 82-83 (GD), S87, 89-92 (NIST), 107-115 (KHGNRSVSS), and S119. G79 is a binding site for anthranilate. Position 91 (S91) interacts with Mg(2+). N110 serves as a coordination point for anthranilate. Residue R165 participates in anthranilate binding. Positions 223 and 224 each coordinate Mg(2+).

Belongs to the anthranilate phosphoribosyltransferase family. In terms of assembly, homodimer. Requires Mg(2+) as cofactor.

It catalyses the reaction N-(5-phospho-beta-D-ribosyl)anthranilate + diphosphate = 5-phospho-alpha-D-ribose 1-diphosphate + anthranilate. It functions in the pathway amino-acid biosynthesis; L-tryptophan biosynthesis; L-tryptophan from chorismate: step 2/5. In terms of biological role, catalyzes the transfer of the phosphoribosyl group of 5-phosphorylribose-1-pyrophosphate (PRPP) to anthranilate to yield N-(5'-phosphoribosyl)-anthranilate (PRA). The sequence is that of Anthranilate phosphoribosyltransferase from Yersinia pseudotuberculosis serotype O:3 (strain YPIII).